A 325-amino-acid polypeptide reads, in one-letter code: uncharacterized protein (325 aa).

Residues 1–69 constitute a chloroplast transit peptide; the sequence is MAMMTTTTTT…KNRRVSVTVS (69 aa). Alanine 70 is subject to N-acetylalanine.

Belongs to the NAD(P)-dependent epimerase/dehydratase family.

It is found in the plastid. Its subcellular location is the chloroplast. This is an uncharacterized protein from Arabidopsis thaliana (Mouse-ear cress).